The chain runs to 308 residues: Elongation factor Ts (308 aa).

The tract at residues 80 to 83 is involved in Mg(2+) ion dislocation from EF-Tu; sequence TDFV.

Belongs to the EF-Ts family.

The protein resides in the cytoplasm. Associates with the EF-Tu.GDP complex and induces the exchange of GDP to GTP. It remains bound to the aminoacyl-tRNA.EF-Tu.GTP complex up to the GTP hydrolysis stage on the ribosome. The chain is Elongation factor Ts from Verminephrobacter eiseniae (strain EF01-2).